We begin with the raw amino-acid sequence, 566 residues long: MKQSMVFSPTLREVPADAEIKSHQLLLRAGFMRQNASGIYSFLPLGLKVLHKVEHIIREEMERAGAVELLMPALQAAELWQESGRWYSYGSELMRMKDRNDREFALGATHEEVITDLVRDEIKSYKKLPLTLYQIQTKFRDEQRPRFGLLRGREFLMKDAYSFHATQESLDEVYDRLFQAYSNIFARCGLNFRAVIADSGAMGGKDTHEFMVLSDVGEDTIAYSDTSDYAANIEMAPVVATYTKSDEAEKALEKVATPDQKAIEEVSAFLNIEPSQCIKTMVFKVDEKFVVVLVRGDHEVNDVKVKNVYGASVVELASYEEVRSLLNCEVGSLGPIGIAEDVEVIADHAVAAIVNGCCGANEEGFHYVNVNSERDFKVNQYADLRFIQEGDQSPDGKGTIRFARGIEVGHVFKLGTRYSEAMNATFLDENGKTKPLIMGCYGIGVSRTVAAIAEQFNDENGLVWPKAVAPFHVHVIPVNMKSDVQREVAENIYTSLQEQGYEVLLDDRTERAGVKFADADLFGLPVRVTVGKKADEGIVEVKVRATNESAEVKVEDLHTYIADILK.

Belongs to the class-II aminoacyl-tRNA synthetase family. ProS type 1 subfamily. As to quaternary structure, homodimer.

Its subcellular location is the cytoplasm. It carries out the reaction tRNA(Pro) + L-proline + ATP = L-prolyl-tRNA(Pro) + AMP + diphosphate. Its function is as follows. Catalyzes the attachment of proline to tRNA(Pro) in a two-step reaction: proline is first activated by ATP to form Pro-AMP and then transferred to the acceptor end of tRNA(Pro). As ProRS can inadvertently accommodate and process non-cognate amino acids such as alanine and cysteine, to avoid such errors it has two additional distinct editing activities against alanine. One activity is designated as 'pretransfer' editing and involves the tRNA(Pro)-independent hydrolysis of activated Ala-AMP. The other activity is designated 'posttransfer' editing and involves deacylation of mischarged Ala-tRNA(Pro). The misacylated Cys-tRNA(Pro) is not edited by ProRS. The protein is Proline--tRNA ligase of Bacillus cytotoxicus (strain DSM 22905 / CIP 110041 / 391-98 / NVH 391-98).